Here is a 588-residue protein sequence, read N- to C-terminus: Pre-mRNA-splicing ATP-dependent RNA helicase PRP28 (588 aa).

Positions 15–94 (NKKKGLDENT…PSKQNGSKFH (80 aa)) are disordered. 2 stretches are compositionally biased toward basic and acidic residues: residues 35-49 (NKQERSKQERLKENE) and 60-83 (AKVEIKKVNSRDDSFFNETNDKKR). Phosphoserine is present on Ser69. The short motif at 172 to 202 (RNWEELNIIPRDLLRVIIQELRFPSPTPIQR) is the Q motif element. The region spanning 208 to 399 (VCNMKQYRDF…AGYMQKPVYA (192 aa)) is the Helicase ATP-binding domain. 221 to 228 (ASTGSGKT) is a binding site for ATP. A DEAD box motif is present at residues 341-344 (DEAD). In terms of domain architecture, Helicase C-terminal spans 427–579 (KLKPIVAKYD…EAVKNKYNVG (153 aa)).

The protein belongs to the DEAD box helicase family. DDX23/PRP28 subfamily. As to quaternary structure, component of the U5 snRNP complex, composed of at least BRR2, PRP8, PRP28, DIB1, LIN1, SMB1, SMD1, SMD2, SMD3, SME1, SMX2, SMX3, and SNU114, associated with the U5 snRNA.

It is found in the cytoplasm. It localises to the nucleus. It catalyses the reaction ATP + H2O = ADP + phosphate + H(+). ATP-dependent RNA helicase involved in mRNA splicing. May destabilize the U1/5'-splice site duplex to permit an effective competition for the 5'-splice site by the U6 snRNA, resulting in the switch between U1 and U6 at the 5'-splice site. May also act to unwind the U4/U6 base-pairing interaction in the U4/U6/U5 snRNP, facilitating the first covalent step of splicing. In Saccharomyces cerevisiae (strain ATCC 204508 / S288c) (Baker's yeast), this protein is Pre-mRNA-splicing ATP-dependent RNA helicase PRP28 (PRP28).